The following is a 507-amino-acid chain: Cytochrome P450 monooxygenase ptmU (507 aa).

Residues 4 to 24 (VNAWWVGGSLLLGIWAIVVFF) form a helical membrane-spanning segment. N-linked (GlcNAc...) asparagine glycosylation is found at Asn-98, Asn-202, and Asn-398. Cys-444 provides a ligand contact to heme.

This sequence belongs to the cytochrome P450 family. It depends on heme as a cofactor.

It localises to the membrane. Its pathway is secondary metabolite biosynthesis. Cytochrome P450 monooxygenase; part of the gene cluster that mediates the biosynthesis of the indole diterpenes penitrems. The geranylgeranyl diphosphate (GGPP) synthase ptmG catalyzes the first step in penitrem biosynthesis via conversion of farnesyl pyrophosphate and isopentyl pyrophosphate into geranylgeranyl pyrophosphate (GGPP). Condensation of indole-3-glycerol phosphate with GGPP by the prenyl transferase ptmC then forms 3-geranylgeranylindole (3-GGI). Epoxidation by the FAD-dependent monooxygenase ptmM leads to a epoxidized-GGI that is substrate of the terpene cyclase ptmB for cyclization to yield paspaline. Paspaline is subsequently converted to 13-desoxypaxilline by the cytochrome P450 monooxygenase ptmP, the latter being then converted to paxilline by the cytochrome P450 monooxygenase ptmQ. Paxilline is converted to beta-paxitriol via C-10 ketoreduction by the short-chain dehydrogenase ptmH which can be monoprenylated at the C-20 by the indole diterpene prenyltransferase ptmD. A two-step elimination (acetylation and elimination) process performed by the O-acetyltransferase ptmV and ptmI leads to the production of the prenylated form of penijanthine. The FAD-linked oxidoreductase ptmO then converts the prenylated form of penijanthine into PC-M5 which is in turn transformed into PC-M4 by the aromatic dimethylallyltransferase ptmE. Five sequential oxidative transformations performed by the cytochrome P450 monooxygenases ptmK, ptmU, ptmL, ptmN and ptmJ yield the various penitrem compounds. PtmK, ptmU and ptmM are involved in the formation of the key bicyclic ring of penitrem C via the formation of the intermediates secopenitrem D and penitrem D. PtmL catalyzes the epoxidation of penitrem D and C to yield penitrem B and F, respectively. PtmJ catalyzes the last benzylic hydroxylation to convert penitrem B to prenitrem E and penitrem F to penitrem A. The polypeptide is Cytochrome P450 monooxygenase ptmU (Penicillium ochrochloron).